The following is a 149-amino-acid chain: Urease accessory protein UreE (149 aa).

This sequence belongs to the UreE family.

It localises to the cytoplasm. Functionally, involved in urease metallocenter assembly. Binds nickel. Probably functions as a nickel donor during metallocenter assembly. This is Urease accessory protein UreE from Prochlorococcus marinus (strain MIT 9215).